The chain runs to 784 residues: MSDLDSSSSSAYPKYLEHLSGDGKAIGVLTSGGDAQGMNAAVRAVVRMGIYTGAKVYFIYEGYQGLVDGGSNIVEAKWDCVSSILQVGGTIIGSARCKAFRSREGRLKAACNLARLGITNLCVIGGDGSLTGANLFRKEWSGLLEELARNGDIDNDTVQKYSYLNVVGMVGSIDNDFCGTDMTIGTDSALHRIIEVVDAIMTTAQSHQRTFVLEVMGRHCGYLALVSALTCGADWVFLPESPPEEDWEENMCLKLSENRARKKRLNIIIVSEGAIDMQNKPITSEKIKELVVKNLGFDTRVTILGHVQRGGTPSAFDRILASRMGVEAVIALLEATPETPACVVSLRGNQAVRLPLMECVQMTQDVQKAMDERRFKEAVKLRGRRFEGNLNTYKRLAIKLPDEKIVKSNCNVAVINVGAPAAGMNAAVRSAVRVGIADGHKMFAIYDGFEGFANGQIKEIGWADVGGWTGQGGSILGTKRTLPGKYLEKIAEQMHSHSINALLIIGGFEAYLGLLELAAAREKHEAFCVPMVMVPATVSNNVPGSDFSIGADTALNTITDTCDRIKQSASGTKRRVFIIETMGGYCGYLANMGALAAGADAAYIFEEPFDIGDLQSNVVHLTEKMKTSIQRGLVLRNESCSVNYTTDFIYQLYSEEGKGVFDCRKNVLGHMQQGGAPSPFDRNFGTKISAKAMEWISAKLKGSQGTGKKFVSDDSICVLGICKRDLLFQPVAELKKVTDFEHRIPKEQWWLKLRPIMKILAKYEASYDMSDSGKLESLQHHEEL.

At M1 the chain carries N-acetylmethionine. Positions 1-398 are N-terminal catalytic PFK domain 1; the sequence is MSDLDSSSSS…NLNTYKRLAI (398 aa). S2, S6, and S20 each carry phosphoserine. ATP contacts are provided by residues G33, 96–97, and 126–129; these read RC and GDGS. Residue D127 coordinates Mg(2+). Residue S141 is modified to Phosphoserine. Residues 172 to 174, R209, 216 to 218, E272, R300, and 306 to 309 contribute to the substrate site; these read SID, MGR, and HVQR. D174 functions as the Proton acceptor in the catalytic mechanism. Position 394 is an N6-acetyllysine (K394). Positions 399–410 are interdomain linker; it reads KLPDEKIVKSNC. Residues 411-784 are C-terminal regulatory PFK domain 2; sequence NVAVINVGAP…LESLQHHEEL (374 aa). R480 contacts beta-D-fructose 2,6-bisphosphate. K485 carries the post-translational modification N6-acetyllysine. Residues 537–541, R575, 582–584, and E638 contribute to the beta-D-fructose 2,6-bisphosphate site; these read TVSNN and MGG. The O-linked (GlcNAc) serine glycan is linked to S539. Y650 bears the Phosphotyrosine mark. Beta-D-fructose 2,6-bisphosphate-binding positions include R664 and 670 to 673; that span reads HMQQ. The residue at position 687 (K687) is an N6-acetyllysine. R743 contacts beta-D-fructose 2,6-bisphosphate.

Belongs to the phosphofructokinase type A (PFKA) family. ATP-dependent PFK group I subfamily. Eukaryotic two domain clade 'E' sub-subfamily. In terms of assembly, homo- and heterotetramers. Phosphofructokinase (PFK) enzyme functions as a tetramer composed of different combinations of 3 types of subunits, called PFKM (M), PFKL (L) and PFKP (P). The composition of the PFK tetramer differs according to the tissue type it is present in. The kinetic and regulatory properties of the tetrameric enzyme are dependent on the subunit composition, hence can vary across tissues. Interacts with ATG4B; promoting phosphorylation of ATG4B. Requires Mg(2+) as cofactor. Post-translationally, glcNAcylation decreases enzyme activity. In terms of tissue distribution, expression is constant during tumor growth and markedly decreases when cell proliferation stops.

The protein resides in the cytoplasm. The enzyme catalyses beta-D-fructose 6-phosphate + ATP = beta-D-fructose 1,6-bisphosphate + ADP + H(+). It participates in carbohydrate degradation; glycolysis; D-glyceraldehyde 3-phosphate and glycerone phosphate from D-glucose: step 3/4. With respect to regulation, allosterically activated by ADP, AMP, or fructose 2,6-bisphosphate, and allosterically inhibited by ATP or citrate. In terms of biological role, catalyzes the phosphorylation of D-fructose 6-phosphate to fructose 1,6-bisphosphate by ATP, the first committing step of glycolysis. This chain is ATP-dependent 6-phosphofructokinase, platelet type (Pfkp), found in Mus musculus (Mouse).